Consider the following 558-residue polypeptide: Dihydroxy-acid dehydratase (558 aa).

A [2Fe-2S] cluster-binding site is contributed by Cys-54. Asp-86 lines the Mg(2+) pocket. Residue Cys-127 coordinates [2Fe-2S] cluster. Positions 128 and 129 each coordinate Mg(2+). Position 129 is an N6-carboxylysine (Lys-129). Cys-199 serves as a coordination point for [2Fe-2S] cluster. Glu-448 serves as a coordination point for Mg(2+). The Proton acceptor role is filled by Ser-474.

It belongs to the IlvD/Edd family. Homodimer. Requires [2Fe-2S] cluster as cofactor. The cofactor is Mg(2+).

It carries out the reaction (2R)-2,3-dihydroxy-3-methylbutanoate = 3-methyl-2-oxobutanoate + H2O. It catalyses the reaction (2R,3R)-2,3-dihydroxy-3-methylpentanoate = (S)-3-methyl-2-oxopentanoate + H2O. It functions in the pathway amino-acid biosynthesis; L-isoleucine biosynthesis; L-isoleucine from 2-oxobutanoate: step 3/4. The protein operates within amino-acid biosynthesis; L-valine biosynthesis; L-valine from pyruvate: step 3/4. Functionally, functions in the biosynthesis of branched-chain amino acids. Catalyzes the dehydration of (2R,3R)-2,3-dihydroxy-3-methylpentanoate (2,3-dihydroxy-3-methylvalerate) into 2-oxo-3-methylpentanoate (2-oxo-3-methylvalerate) and of (2R)-2,3-dihydroxy-3-methylbutanoate (2,3-dihydroxyisovalerate) into 2-oxo-3-methylbutanoate (2-oxoisovalerate), the penultimate precursor to L-isoleucine and L-valine, respectively. In Acidothermus cellulolyticus (strain ATCC 43068 / DSM 8971 / 11B), this protein is Dihydroxy-acid dehydratase.